The chain runs to 256 residues: Flap endonuclease Xni (256 aa).

Position 105 (D105) interacts with Mg(2+). The 5'-3' exonuclease domain occupies R163–E256. Residues L172, A173, P181, V183, and I186 each coordinate K(+). An interaction with DNA region spans residues G185 to S190.

It belongs to the Xni family. Mg(2+) serves as cofactor. It depends on K(+) as a cofactor.

Its function is as follows. Has flap endonuclease activity. During DNA replication, flap endonucleases cleave the 5'-overhanging flap structure that is generated by displacement synthesis when DNA polymerase encounters the 5'-end of a downstream Okazaki fragment. The sequence is that of Flap endonuclease Xni from Shewanella pealeana (strain ATCC 700345 / ANG-SQ1).